Consider the following 412-residue polypeptide: Odorant receptor 47b (412 aa).

Topologically, residues 1–74 (MNDSGYQSNL…NLFIMCNVMT (74 aa)) are cytoplasmic. The chain crosses the membrane as a helical span at residues 75–95 (IFWTMFVALPESKNVIEMGDD). Over 96–103 (LVWISGMA) the chain is Extracellular. Residues 104-124 (LVFTKIFYMHLRCDEIDELIS) traverse the membrane as a helical segment. Topologically, residues 125-169 (DFEYYNRELRPHNIDEEVLGWQRLCYVIESGLYINCFCLVNFFSA) are cytoplasmic. A helical membrane pass occupies residues 170–190 (AIFLQPLLGEGKLPFHSVYPF). At 191 to 229 (QWHRLDLHPYTFWFLYIWQSLTSQHNLMSILMVDMVGIS) the chain is on the extracellular side. A helical membrane pass occupies residues 230–250 (TFLQTALNLKLLCIEIRKLGD). Topologically, residues 251-302 (MEVSDKRFHEEFCRVVRFHQHIIKLVGKANRAFNGAFNAQLMASFSLISIST) are cytoplasmic. Residues 303 to 323 (FETMAAAAVDPKMAAKFVLLM) form a helical membrane-spanning segment. Over 324–330 (LVAFIQL) the chain is Extracellular. The chain crosses the membrane as a helical span at residues 331–351 (SLWCVSGTLVYTQSVEVAQAA). The Cytoplasmic portion of the chain corresponds to 352 to 389 (FDINDWHTKSPGIQRDISFVILRAQKPLMYVAEPFLPF). A helical membrane pass occupies residues 390 to 410 (TLGTYMLVLKNCYRLLALMQE). The Extracellular portion of the chain corresponds to 411 to 412 (SM).

Belongs to the insect chemoreceptor superfamily. Heteromeric odorant receptor channel (TC 1.A.69) family. Or49a subfamily. In terms of assembly, interacts with Orco. Complexes exist early in the endomembrane system in olfactory sensory neurons (OSNs), coupling these complexes to the conserved ciliary trafficking pathway. As to expression, expressed in olfactory sensory neurons in the antenna.

The protein resides in the cell membrane. In terms of biological role, odorant receptor which mediates acceptance or avoidance behavior, depending on its substrates. The odorant receptor repertoire encodes a large collection of odor stimuli that vary widely in identity, intensity, and duration. May form a complex with Orco to form odorant-sensing units, providing sensitive and prolonged odorant signaling and calcium permeability. Plays an important role in sociosexual interactions since its enhances courtship in a pheromone-dependent manner. The chain is Odorant receptor 47b (Or47b) from Drosophila melanogaster (Fruit fly).